The sequence spans 904 residues: Nitrate reductase [NADH] 1 (904 aa).

2 stretches are compositionally biased toward polar residues: residues Met-1–Phe-10 and Ser-39–Ile-50. The disordered stretch occupies residues Met-1–Glu-65. The span at Ser-56–Glu-65 shows a compositional bias: acidic residues. A Mo-molybdopterin-binding site is contributed by Cys-183. A Cytochrome b5 heme-binding domain is found at Ser-531 to Leu-606. Heme contacts are provided by His-566 and His-589. The 113-residue stretch at Arg-647 to Gln-759 folds into the FAD-binding FR-type domain. FAD-binding positions include Arg-699–Thr-702, Val-716–Tyr-720, Phe-721, Phe-728, Gln-733–Ser-735, and Thr-786.

It belongs to the nitrate reductase family. As to quaternary structure, homodimer. The cofactor is FAD. It depends on heme as a cofactor. Requires Mo-molybdopterin as cofactor.

It catalyses the reaction nitrite + NAD(+) + H2O = nitrate + NADH + H(+). Regulated by the nitrogen source and controlled by the circadian rhythm. Functionally, nitrate reductase is a key enzyme involved in the first step of nitrate assimilation in plants, fungi and bacteria. The sequence is that of Nitrate reductase [NADH] 1 (NIA1) from Nicotiana tabacum (Common tobacco).